Reading from the N-terminus, the 31-residue chain is Photosystem II reaction center protein T (31 aa).

A helical membrane pass occupies residues 3-23; it reads AFSYVLILTLALVTLFFAVAF.

It belongs to the PsbT family. In terms of assembly, PSII is composed of 1 copy each of membrane proteins PsbA, PsbB, PsbC, PsbD, PsbE, PsbF, PsbH, PsbI, PsbJ, PsbK, PsbL, PsbM, PsbT, PsbX, PsbY, Psb30/Ycf12, peripheral proteins PsbO, CyanoQ (PsbQ), PsbU, PsbV and a large number of cofactors. It forms dimeric complexes.

Its subcellular location is the cellular thylakoid membrane. In terms of biological role, found at the monomer-monomer interface of the photosystem II (PS II) dimer, plays a role in assembly and dimerization of PSII. PSII is a light-driven water plastoquinone oxidoreductase, using light energy to abstract electrons from H(2)O, generating a proton gradient subsequently used for ATP formation. In Prochlorococcus marinus (strain NATL2A), this protein is Photosystem II reaction center protein T.